We begin with the raw amino-acid sequence, 228 residues long: 30 kDa heat shock protein (228 aa).

3 disordered regions span residues 34–53, 117–136, and 144–174; these read EVQGSAPETGSRRHTQPTRT, KGEPHSPAAHHATVEDDVDE, and TATGANNQNNQQVAQRASAPTTEEKPKAPAE. A sHSP domain is found at 49–228; sequence QPTRTFSPKF…KHETIRIAIN (180 aa). Residues 144–158 show a composition bias toward low complexity; that stretch reads TATGANNQNNQQVAQ.

This sequence belongs to the small heat shock protein (HSP20) family.

The protein localises to the cytoplasm. This chain is 30 kDa heat shock protein (hsp30), found in Neurospora crassa (strain ATCC 24698 / 74-OR23-1A / CBS 708.71 / DSM 1257 / FGSC 987).